Reading from the N-terminus, the 118-residue chain is Large ribosomal subunit protein bL20 (118 aa).

Belongs to the bacterial ribosomal protein bL20 family.

Binds directly to 23S ribosomal RNA and is necessary for the in vitro assembly process of the 50S ribosomal subunit. It is not involved in the protein synthesizing functions of that subunit. The chain is Large ribosomal subunit protein bL20 from Rhodopirellula baltica (strain DSM 10527 / NCIMB 13988 / SH1).